We begin with the raw amino-acid sequence, 620 residues long: Acetylcholinesterase 1 (620 aa).

A signal peptide spans 1-31 (MRYSLLFFIFLPCVITAVDLIHLHDGSPLFG). Asn74 carries an N-linked (GlcNAc...) asparagine glycan. Residues Cys82 and Cys109 are joined by a disulfide bond. Ser216 (acyl-ester intermediate) is an active-site residue. An intrachain disulfide couples Cys270 to Cys286. Asn272 is a glycosylation site (N-linked (GlcNAc...) asparagine). Catalysis depends on charge relay system residues Glu346 and His468. A disulfide bridge connects residues Cys430 and Cys558. Asn486 and Asn536 each carry an N-linked (GlcNAc...) asparagine glycan.

The protein belongs to the type-B carboxylesterase/lipase family. In terms of assembly, oligomer composed of disulfide-linked homodimers.

The protein localises to the synapse. Its subcellular location is the secreted. It is found in the cell membrane. It carries out the reaction acetylcholine + H2O = choline + acetate + H(+). In terms of biological role, rapidly hydrolyzes choline released into the synapse. This is Acetylcholinesterase 1 (ace-1) from Caenorhabditis briggsae.